The chain runs to 256 residues: ATP synthase peripheral stalk subunit b, mitochondrial (256 aa).

Residues 1–42 (MLSRVVLSAAATAAPSLKNAAFLGPGVLQATRTFHTGQPHLV) constitute a mitochondrion transit peptide. Lys131 carries the N6-succinyllysine modification. 6 positions are modified to N6-acetyllysine: Lys139, Lys154, Lys162, Lys221, Lys233, and Lys244.

The protein belongs to the eukaryotic ATPase B chain family. In terms of assembly, component of the ATP synthase complex composed at least of ATP5F1A/subunit alpha, ATP5F1B/subunit beta, ATP5MC1/subunit c (homooctomer), MT-ATP6/subunit a, MT-ATP8/subunit 8, ATP5ME/subunit e, ATP5MF/subunit f, ATP5MG/subunit g, ATP5MK/subunit k, ATP5MJ/subunit j, ATP5F1C/subunit gamma, ATP5F1D/subunit delta, ATP5F1E/subunit epsilon, ATP5PF/subunit F6, ATP5PB/subunit b, ATP5PD/subunit d, ATP5PO/subunit OSCP. ATP synthase complex consists of a soluble F(1) head domain (subunits alpha(3) and beta(3)) - the catalytic core - and a membrane F(0) domain - the membrane proton channel (subunits c, a, 8, e, f, g, k and j). These two domains are linked by a central stalk (subunits gamma, delta, and epsilon) rotating inside the F1 region and a stationary peripheral stalk (subunits F6, b, d, and OSCP).

The protein localises to the mitochondrion. It is found in the mitochondrion inner membrane. Functionally, subunit b, of the mitochondrial membrane ATP synthase complex (F(1)F(0) ATP synthase or Complex V) that produces ATP from ADP in the presence of a proton gradient across the membrane which is generated by electron transport complexes of the respiratory chain. ATP synthase complex consist of a soluble F(1) head domain - the catalytic core - and a membrane F(1) domain - the membrane proton channel. These two domains are linked by a central stalk rotating inside the F(1) region and a stationary peripheral stalk. During catalysis, ATP synthesis in the catalytic domain of F(1) is coupled via a rotary mechanism of the central stalk subunits to proton translocation. In vivo, can only synthesize ATP although its ATP hydrolase activity can be activated artificially in vitro. Part of the complex F(0) domain. Part of the complex F(0) domain and the peripheric stalk, which acts as a stator to hold the catalytic alpha(3)beta(3) subcomplex and subunit a/ATP6 static relative to the rotary elements. This chain is ATP synthase peripheral stalk subunit b, mitochondrial, found in Homo sapiens (Human).